The primary structure comprises 217 residues: Ras-related protein RABA1f (217 aa).

20–27 is a GTP binding site; the sequence is GDSGVGKS. The short motif at 42–50 is the Effector region element; that stretch reads SKSTIGVEF. GTP contacts are provided by residues 68 to 72, 126 to 129, and 156 to 157; these read DTAGQ, NKAD, and SA. Residues Cys214 and Cys215 are each lipidated (S-geranylgeranyl cysteine).

The protein belongs to the small GTPase superfamily. Rab family.

It localises to the cell membrane. Intracellular vesicle trafficking and protein transport. The protein is Ras-related protein RABA1f (RABA1F) of Arabidopsis thaliana (Mouse-ear cress).